The following is a 646-amino-acid chain: Kinesin-like protein klp-20 (646 aa).

Residues 6–331 enclose the Kinesin motor domain; that stretch reads KVKVVVRCRP…LRYANRAKNI (326 aa). 91 to 98 is an ATP binding site; it reads GQTGTGKT. A coiled-coil region spans residues 342–552; sequence KDAQLRKFQL…LRKELLLNIA (211 aa). The interval 525 to 550 is interaction with klp-11; the sequence is LEEDHQRQVEAMLDDIRQLRKELLLN. The segment at 623-646 is disordered; that stretch reads TAEHRPRTSSKKHRASIRLQQLLT. A compositionally biased stretch (basic residues) spans 629-638; it reads RTSSKKHRAS.

This sequence belongs to the TRAFAC class myosin-kinesin ATPase superfamily. Kinesin family. Kinesin II subfamily. As to quaternary structure, component of the kinesin II motor complex, a heterotrimeric complex composed of kap-1, klp-11 and klp-20. Interacts (via C-terminus) with klp-11 (via C-terminus) to form a heterodimer. Furthermore, within the heterodimer, the C-termini of klp-20 and klp-11 interact to form a coiled coil (stalk) or tail domain, and this is necessary for association with kap-1, and kinesin II motor complex activity upon IFT cargo binding. Prior to cargo binding, the klp-11/klp-20 heterodimer is autoinhibited by the tail domain of the heterodimer, which folds onto the kinesin motor domain. Cargo binding to the heterodimer relieves the autoinhibition, and allows for an extended conformation of the tail domain, and function of the heterodimer.

Its subcellular location is the cell projection. The protein resides in the cilium. The protein localises to the cytoplasm. It is found in the cytoskeleton. Functionally, component of the kinesin II motor complex (composed of kap-1 and the heterodimeric motor proteins klp-11 and klp-20) which is required for intraflagellar transport (IFT). Heterodimerizes with klp-11 to form a 'processive' molecular motor upon IFT cargo binding, which, within the kinesin II motor complex, binds to and moves along microtubules in a unidirectional manner (without dissociation of the heterodimer), and in turn, is responsible for the IFT of cargo. Specifically, the kinesin II motor complex, together with the kinesin motor protein osm-3 moves along microtubules and is required for anterograde IFT along the middle segment of the sensory neuron cilia. In particular, the kinesin II motor complex delivers specific ciliary cargo proteins such as che-3 which are related to motility to ciliary tips. This is likely mediated by IFT complexes A and B. This Caenorhabditis elegans protein is Kinesin-like protein klp-20.